A 451-amino-acid polypeptide reads, in one-letter code: tRNA-2-methylthio-N(6)-dimethylallyladenosine synthase (451 aa).

The MTTase N-terminal domain maps to 2 to 119 (QNLYIKTYGC…LPDLLDACLA (118 aa)). Residues Cys-11, Cys-48, Cys-82, Cys-157, Cys-161, and Cys-164 each contribute to the [4Fe-4S] cluster site. A Radical SAM core domain is found at 143-377 (GRDGATAFVT…RINGLAQGYA (235 aa)). A TRAM domain is found at 378 to 441 (QALVGTQQAV…PNSLRGRAAL (64 aa)).

This sequence belongs to the methylthiotransferase family. MiaB subfamily. As to quaternary structure, monomer. The cofactor is [4Fe-4S] cluster.

Its subcellular location is the cytoplasm. It catalyses the reaction N(6)-dimethylallyladenosine(37) in tRNA + (sulfur carrier)-SH + AH2 + 2 S-adenosyl-L-methionine = 2-methylsulfanyl-N(6)-dimethylallyladenosine(37) in tRNA + (sulfur carrier)-H + 5'-deoxyadenosine + L-methionine + A + S-adenosyl-L-homocysteine + 2 H(+). Catalyzes the methylthiolation of N6-(dimethylallyl)adenosine (i(6)A), leading to the formation of 2-methylthio-N6-(dimethylallyl)adenosine (ms(2)i(6)A) at position 37 in tRNAs that read codons beginning with uridine. The protein is tRNA-2-methylthio-N(6)-dimethylallyladenosine synthase of Acidithiobacillus ferrooxidans (strain ATCC 23270 / DSM 14882 / CIP 104768 / NCIMB 8455) (Ferrobacillus ferrooxidans (strain ATCC 23270)).